Consider the following 288-residue polypeptide: ATP synthase gamma chain (288 aa).

This sequence belongs to the ATPase gamma chain family. F-type ATPases have 2 components, CF(1) - the catalytic core - and CF(0) - the membrane proton channel. CF(1) has five subunits: alpha(3), beta(3), gamma(1), delta(1), epsilon(1). CF(0) has three main subunits: a, b and c.

It localises to the cell inner membrane. In terms of biological role, produces ATP from ADP in the presence of a proton gradient across the membrane. The gamma chain is believed to be important in regulating ATPase activity and the flow of protons through the CF(0) complex. The protein is ATP synthase gamma chain of Blochmanniella floridana.